A 154-amino-acid chain; its full sequence is Protein X (154 aa).

A mitochondrial targeting sequence region spans residues 68–117 (PCALRFTSARRMETTVNAHQVLPKVLHKRTLGLSAMSTTDLEAYFKDCLF).

This sequence belongs to the orthohepadnavirus protein X family. May form homodimer. May interact with host CEBPA, CFLAR, CREB1, DDB1, E4F1, HBXIP, HSPD1/HSP60, NFKBIA, POLR2E and SMAD4. Interacts with host SMC5-SMC6 complex and induces its degradation. Interacts with host TRPC4AP; leading to prevent ubiquitination of TRPC4AP. Interacts with host PLSCR1; this interaction promotes ubiquitination and degradation of HBx and impairs HBx-mediated cell proliferation. Post-translationally, a fraction may be phosphorylated in insect cells and HepG2 cells, a human hepatoblastoma cell line. Phosphorylated in vitro by host protein kinase C or mitogen-activated protein kinase. N-acetylated in insect cells.

It is found in the host cytoplasm. Its subcellular location is the host nucleus. The protein localises to the host mitochondrion. Its function is as follows. Multifunctional protein that plays a role in silencing host antiviral defenses and promoting viral transcription. Does not seem to be essential for HBV infection. May be directly involved in development of cirrhosis and liver cancer (hepatocellular carcinoma). Most of cytosolic activities involve modulation of cytosolic calcium. The effect on apoptosis is controversial depending on the cell types in which the studies have been conducted. May induce apoptosis by localizing in mitochondria and causing loss of mitochondrial membrane potential. May also modulate apoptosis by binding host CFLAR, a key regulator of the death-inducing signaling complex (DISC). Promotes viral transcription by using the host E3 ubiquitin ligase DDB1 to target the SMC5-SMC6 complex to proteasomal degradation. This host complex would otherwise bind to viral episomal DNA, and prevents its transcription. Moderately stimulates transcription of many different viral and cellular transcription elements. Promoters and enhancers stimulated by HBx contain DNA binding sites for NF-kappa-B, AP-1, AP-2, c-EBP, ATF/CREB, or the calcium-activated factor NF-AT. In Hepatitis B virus genotype C subtype adr (isolate Japan/Nishioka/1983) (HBV-C), this protein is Protein X.